Consider the following 266-residue polypeptide: Pyrrolizixenacetamide deacetylase (266 aa).

An acetate-binding site is contributed by T28. The active-site Nucleophile is the S94. L95 lines the acetate pocket. Active-site charge relay system residues include D215 and H242. H242 contributes to the acetate binding site.

This sequence belongs to the AB hydrolase superfamily. As to quaternary structure, homodimer.

The catalysed reaction is pyrrolizixenacetamide + H2O = 3-amino-5,6,7,7a-tetrahydro-1H-pyrrolizin-1-one + acetate + H(+). Involved in the biosynthetic pathway of pyrrolizwilline, a pyrrolizidine alkaloid. Catalyzes the N-deacetylation of pyrrolizixenacetamide. The chain is Pyrrolizixenacetamide deacetylase from Xenorhabdus hominickii.